The following is a 219-amino-acid chain: Cysteine dioxygenase (219 aa).

Positions 106, 108, and 166 each coordinate Fe cation. The 3'-(S-cysteinyl)-tyrosine (Cys-Tyr) cross-link spans 113–183; sequence CVMKILHGSL…NDFAISLHLY (71 aa).

This sequence belongs to the cysteine dioxygenase family. Requires Fe cation as cofactor. In terms of processing, the thioether cross-link between Cys-113 and Tyr-183 plays a structural role through stabilizing the Fe(2+) ion, and prevents the production of highly damaging free hydroxyl radicals by holding the oxygen radical via hydroxyl hydrogen.

It catalyses the reaction L-cysteine + O2 = 3-sulfino-L-alanine + H(+). Its function is as follows. Cysteine dioxygenase involved in sulfite formation from cysteine. Required for keratin degradation and plays an important role in filamentous growth and virulence. In Arthroderma benhamiae (Trichophyton mentagrophytes), this protein is Cysteine dioxygenase.